The sequence spans 126 residues: Arginine decarboxylase proenzyme (126 aa).

The Schiff-base intermediate with substrate; via pyruvic acid role is filled by S74. Position 74 is a pyruvic acid (Ser); by autocatalysis (S74). The active-site Proton acceptor; for processing activity is H79. The active-site Proton donor; for catalytic activity is the C94.

Belongs to the prokaryotic AdoMetDC family. Type 1 subfamily. As to quaternary structure, heterooctamer of four alpha and four beta chains arranged as a tetramer of alpha/beta heterodimers. It depends on pyruvate as a cofactor. Post-translationally, is synthesized initially as an inactive proenzyme. Formation of the active enzyme involves a self-maturation process in which the active site pyruvoyl group is generated from an internal serine residue via an autocatalytic post-translational modification. Two non-identical subunits are generated from the proenzyme in this reaction, and the pyruvate is formed at the N-terminus of the alpha chain, which is derived from the carboxyl end of the proenzyme. The post-translation cleavage follows an unusual pathway, termed non-hydrolytic serinolysis, in which the side chain hydroxyl group of the serine supplies its oxygen atom to form the C-terminus of the beta chain, while the remainder of the serine residue undergoes an oxidative deamination to produce ammonia and the pyruvoyl group blocking the N-terminus of the alpha chain.

It carries out the reaction L-arginine + H(+) = agmatine + CO2. It functions in the pathway amine and polyamine biosynthesis; agmatine biosynthesis; agmatine from L-arginine: step 1/1. Functionally, specifically catalyzes the decarboxylation of L-arginine to agmatine. Has no S-adenosylmethionine decarboxylase (AdoMetDC) activity. The polypeptide is Arginine decarboxylase proenzyme (Pyrobaculum islandicum (strain DSM 4184 / JCM 9189 / GEO3)).